The sequence spans 89 residues: Small ribosomal subunit protein uS15 (89 aa).

This sequence belongs to the universal ribosomal protein uS15 family. In terms of assembly, part of the 30S ribosomal subunit. Forms a bridge to the 50S subunit in the 70S ribosome, contacting the 23S rRNA.

Functionally, one of the primary rRNA binding proteins, it binds directly to 16S rRNA where it helps nucleate assembly of the platform of the 30S subunit by binding and bridging several RNA helices of the 16S rRNA. In terms of biological role, forms an intersubunit bridge (bridge B4) with the 23S rRNA of the 50S subunit in the ribosome. This chain is Small ribosomal subunit protein uS15, found in Shewanella sediminis (strain HAW-EB3).